The sequence spans 116 residues: Holo-[acyl-carrier-protein] synthase (116 aa).

Positions 8 and 50 each coordinate Mg(2+).

It belongs to the P-Pant transferase superfamily. AcpS family. The cofactor is Mg(2+).

It localises to the cytoplasm. The enzyme catalyses apo-[ACP] + CoA = holo-[ACP] + adenosine 3',5'-bisphosphate + H(+). Transfers the 4'-phosphopantetheine moiety from coenzyme A to a Ser of acyl-carrier-protein. The sequence is that of Holo-[acyl-carrier-protein] synthase from Beutenbergia cavernae (strain ATCC BAA-8 / DSM 12333 / CCUG 43141 / JCM 11478 / NBRC 16432 / NCIMB 13614 / HKI 0122).